Reading from the N-terminus, the 272-residue chain is Bis(5'-nucleosyl)-tetraphosphatase, symmetrical (272 aa).

This sequence belongs to the Ap4A hydrolase family.

The catalysed reaction is P(1),P(4)-bis(5'-adenosyl) tetraphosphate + H2O = 2 ADP + 2 H(+). In terms of biological role, hydrolyzes diadenosine 5',5'''-P1,P4-tetraphosphate to yield ADP. This chain is Bis(5'-nucleosyl)-tetraphosphatase, symmetrical, found in Ectopseudomonas mendocina (strain ymp) (Pseudomonas mendocina).